The chain runs to 398 residues: MQSSTSAVIEKTEKYGAKNYHPLPIVISEAKGVWVKDPEGRKYLDMLSAYSAVNQGHCHPKIIQALKDQADKITLTSRAFHNDQLAPFYEKVSKLTGKNMLLPMNTGAEAVETAVKAARRWAYDVKGVPDNQAEIIVCEDNFHGRTMTAVSLSSNDEYKRGFGPMLPGIKVIPYGDLEALKAAITSHTAAFLVEPIQGEAGIRIPQEGFLKEAYALCKRENVLFIADEIQSGLGRSGKWFACDWEDVKPDMYILGKALGGGVFPISVVCADRDILGVFEPGSHGSTFGGNPLACAVSIAALEVLEEEKLVERSYEYGNYLLTKLKEIDNPIIKDVRGRGLFIGVELHEPARKYCEQLKEEGLLCKETHETVIRFAPPLVISKEDLDWAIEKIYYVLKP.

At lysine 256 the chain carries N6-(pyridoxal phosphate)lysine.

It belongs to the class-III pyridoxal-phosphate-dependent aminotransferase family. OAT subfamily. It depends on pyridoxal 5'-phosphate as a cofactor.

The protein resides in the cytoplasm. It carries out the reaction a 2-oxocarboxylate + L-ornithine = L-glutamate 5-semialdehyde + an L-alpha-amino acid. Its pathway is amino-acid biosynthesis; L-proline biosynthesis; L-glutamate 5-semialdehyde from L-ornithine: step 1/1. Its function is as follows. Catalyzes the interconversion of ornithine to glutamate semialdehyde. This is Ornithine aminotransferase from Halalkalibacterium halodurans (strain ATCC BAA-125 / DSM 18197 / FERM 7344 / JCM 9153 / C-125) (Bacillus halodurans).